A 217-amino-acid polypeptide reads, in one-letter code: MGAYRADDDYDYLFKLVLIGDSGVGKSNLLSRFTRNEFSIESKSTIGVEFATRSVHVDEKIIKAQLWDTAGQERYRAITSAYYRGAVGALLVYDITRHITFENVERWLKELRDHTDANVVIMLVGNKADLRHLRAVPTEEARSFSERENMFFMETSALDATNVEQAFTHVLTQIYRVMSRKALDGTGDPMSLPKGQTIDIGNKDDVTAVKSSGCCSG.

Position 20–27 (20–27 (GDSGVGKS)) interacts with GTP. Residues 42–50 (SKSTIGVEF) carry the Effector region motif. GTP contacts are provided by residues 68–72 (DTAGQ), 126–129 (NKAD), and 156–157 (SA). S-geranylgeranyl cysteine attachment occurs at residues cysteine 214 and cysteine 215.

Belongs to the small GTPase superfamily. Rab family.

The protein localises to the cell membrane. Functionally, intracellular vesicle trafficking and protein transport. The chain is Ras-related protein RABA1e (RABA1E) from Arabidopsis thaliana (Mouse-ear cress).